The sequence spans 366 residues: Methyltransferase phm5 (366 aa).

Residues 204–205 (GG), Asp-230, 255–256 (SM), Arg-273, and Arg-274 each bind S-adenosyl-L-methionine.

Belongs to the class I-like SAM-binding methyltransferase superfamily. Cation-independent O-methyltransferase family.

It functions in the pathway secondary metabolite biosynthesis. Methyltransferase; part of the gene cluster that mediates the biosynthesis of the trans-fused decalin-containing tetramic acid phomasetin, the stereochemical opposite of the HIV-1 integrase inhibitor equisetin. The PKS module of phm1 together with the enoylreductase phm4 catalyze the formation of the polyketide unit which is then conjugated to L-serine by the condensation domain of the phm1 NRPS module. Activity of the Dieckmann cyclase domain (RED) of phm1 results in release of the Dieckmann product intermediate. The Diels-Alderase phm7 then uses the Dieckmann product of phm1 as substrate and catalyzes the Diels-Alder cycloaddition to form the decalin ring of N-desmethylphomasetin. N-desmethylphomasetin is further methylated to phomasetin by the methyltransferase phm5. The polypeptide is Methyltransferase phm5 (Pyrenochaetopsis sp).